Consider the following 239-residue polypeptide: Lytic polysaccharide monooxygenase-like protein X325 (239 aa).

Residues 1–24 (MVLPSSVSQWAALIALLCAGLANA) form the signal peptide. Residue His25 coordinates Cu(2+). Residues Asn41, Asn56, Asn79, Asn117, Asn150, and Asn197 are each glycosylated (N-linked (GlcNAc...) asparagine). 2 disulfides stabilise this stretch: Cys71-Cys176 and Cys141-Cys195. Ser214 carries GPI-anchor amidated serine lipidation. The propeptide at 215-239 (AAAPKSSLMSVLPVYMVALLSWAMM) is removed in mature form.

Belongs to the X325 family. Cu(2+) serves as cofactor.

Its subcellular location is the cell membrane. Functionally, lytic polysaccharide monooxygenase-like protein that has diverged to biological functions other than polysaccharide degradation since it does not perform oxidative cleavage of polysaccharides. Acts as a cell surface-bound protein that functions in the copper-accumulation pathway. May also act as the major cell wall sensor that regulates MAP kinase-dependent hyphal anastomosis, the fusion of hyphal cells. This is Lytic polysaccharide monooxygenase-like protein X325 from Aspergillus fumigatus (strain ATCC MYA-4609 / CBS 101355 / FGSC A1100 / Af293) (Neosartorya fumigata).